We begin with the raw amino-acid sequence, 213 residues long: Holliday junction resolvase RecU (213 aa).

Mg(2+)-binding residues include Thr-98, Asp-100, Glu-113, and Gln-132.

The protein belongs to the RecU family. Mg(2+) is required as a cofactor.

The protein resides in the cytoplasm. It catalyses the reaction Endonucleolytic cleavage at a junction such as a reciprocal single-stranded crossover between two homologous DNA duplexes (Holliday junction).. Endonuclease that resolves Holliday junction intermediates in genetic recombination. Cleaves mobile four-strand junctions by introducing symmetrical nicks in paired strands. Promotes annealing of linear ssDNA with homologous dsDNA. Required for DNA repair, homologous recombination and chromosome segregation. This chain is Holliday junction resolvase RecU, found in Ligilactobacillus salivarius (strain UCC118) (Lactobacillus salivarius).